The following is a 357-amino-acid chain: Mitogen-activated protein kinase kinase SIPKK (357 aa).

One can recognise a Protein kinase domain in the interval 70-330 (FEAVKVIGKG…ANELMRHPFI (261 aa)). Residues 76–84 (IGKGNGGIV) and Lys99 contribute to the ATP site. Asp192 acts as the Proton acceptor in catalysis.

The protein belongs to the protein kinase superfamily. STE Ser/Thr protein kinase family. MAP kinase kinase subfamily. In terms of assembly, interacts with SIPK.

It carries out the reaction L-tyrosyl-[protein] + ATP = O-phospho-L-tyrosyl-[protein] + ADP + H(+). The catalysed reaction is L-seryl-[protein] + ATP = O-phospho-L-seryl-[protein] + ADP + H(+). The enzyme catalyses L-threonyl-[protein] + ATP = O-phospho-L-threonyl-[protein] + ADP + H(+). In terms of biological role, phosphorylates myelin basic protein (MBP) in vitro. May be involved in disease resistance. This Nicotiana tabacum (Common tobacco) protein is Mitogen-activated protein kinase kinase SIPKK.